Consider the following 316-residue polypeptide: Acetyl-coenzyme A carboxylase carboxyl transferase subunit alpha (316 aa).

Residues 40–293 (LERRSKDALR…GETIENGFRE (254 aa)) enclose the CoA carboxyltransferase C-terminal domain.

This sequence belongs to the AccA family. In terms of assembly, acetyl-CoA carboxylase is a heterohexamer composed of biotin carboxyl carrier protein (AccB), biotin carboxylase (AccC) and two subunits each of ACCase subunit alpha (AccA) and ACCase subunit beta (AccD).

It localises to the cytoplasm. It catalyses the reaction N(6)-carboxybiotinyl-L-lysyl-[protein] + acetyl-CoA = N(6)-biotinyl-L-lysyl-[protein] + malonyl-CoA. It functions in the pathway lipid metabolism; malonyl-CoA biosynthesis; malonyl-CoA from acetyl-CoA: step 1/1. Functionally, component of the acetyl coenzyme A carboxylase (ACC) complex. First, biotin carboxylase catalyzes the carboxylation of biotin on its carrier protein (BCCP) and then the CO(2) group is transferred by the carboxyltransferase to acetyl-CoA to form malonyl-CoA. The sequence is that of Acetyl-coenzyme A carboxylase carboxyl transferase subunit alpha from Chelativorans sp. (strain BNC1).